A 499-amino-acid chain; its full sequence is MAMAEGERTECAEPPRDEPPADGALKRAEELKTQANDYFKAKDYENAIKFYSQAIELNPSNAIYYGNRSLAYLRTECYGYALGDATRAIELDKKYIKGYYRRAASNMALGKFRAALRDYETVVKVKPHDKDAKMKYQECNKIVKQKAFERAIAGDEHKRSVVDSLDIESMTIEDEYSGPKLEDGKVTISFMKELMQWYKDQKKLHRKCAYQILVQVKEVLSKLSTLVETTLKETEKITVCGDTHGQFYDLLNIFELNGLPSETNPYIFNGDFVDRGSFSVEVILTLFGFKLLYPDHFHLLRGNHETDNMNQIYGFEGEVKAKYTAQMYELFSEVFEWLPLAQCINGKVLIMHGGLFSEDGVTLDDIRKIERNRQPPDSGPMCDLLWSDPQPQNGRSISKRGVSCQFGPDVTKAFLEENNLDYIIRSHEVKAEGYEVAHGGRCVTVFSAPNYCDQMGNKASYIHLQGSDLRPQFHQFTAVPHPNVKPMAYANTLLQLGMM.

The disordered stretch occupies residues 1–23 (MAMAEGERTECAEPPRDEPPADG). N-acetylalanine is present on Ala-2. TPR repeat units follow at residues 28 to 61 (AEEL…NPSN), 62 to 95 (AIYY…DKKY), and 96 to 129 (IKGY…KPHD). Positions 184–499 (GKVTISFMKE…ANTLLQLGMM (316 aa)) are catalytic. 3 residues coordinate Mn(2+): Asp-242, His-244, and Asp-271. Substrate is bound at residue His-244. Substrate contacts are provided by residues Arg-275 and 303–304 (NH). Mn(2+) is bound at residue Asn-303. The Proton donor/acceptor role is filled by His-304. His-352 is a binding site for Mn(2+). Substrate contacts are provided by Arg-400 and His-427. A Mn(2+)-binding site is contributed by His-427. Residues 495 to 499 (QLGMM) are required for autoinhibition.

The protein belongs to the PPP phosphatase family. PP-5 (PP-T) subfamily. In terms of assembly, probably forms a complex composed of chaperones HSP90 and HSP70, co-chaperones STIP1/HOP, CDC37, PPP5C, PTGES3/p23, TSC1 and client protein TSC2. Probably forms a complex composed of chaperones HSP90 and HSP70, co-chaperones CDC37, PPP5C, TSC1 and client protein TSC2, CDK4, AKT, RAF1 and NR3C1; this complex does not contain co-chaperones STIP1/HOP and PTGES3/p23. Part of a complex with HSP90/HSP90AA1 and steroid receptors. Interacts (via TPR repeats) with HSP90AA1 (via TPR repeat-binding motif) or HSPA1A/HSPA1B; the interaction is direct and activates the phosphatase activity. Dissociates from HSPA1A/HSPA1B and HSP90AA1 in response to arachidonic acid. Interacts with CPNE1 (via VWFA domain). Interacts with CDC16, CDC27. Interacts with KLHDC10 (via the 6 Kelch repeats); inhibits the phosphatase activity on MAP3K5. Interacts with ATM and ATR; both interactions are induced by DNA damage and enhance ATM and ATR kinase activity. Interacts with RAD17; reduced by DNA damage. Interacts with nuclear receptors such as NR3C1/GCR and PPARG (activated by agonist); regulates their transactivation activities. Interacts (via TPR repeats) with S100 proteins S100A1, S100A2, S100A6, S100B and S100P; the interactions are calcium-dependent, strongly activate PPP5C phosphatase activity and compete with HSP90AA1 and MAP3K5 interactions. Interacts with SMAD2 and SMAD3 but not with SMAD1; decreases SMAD3 phosphorylation and protein levels. Interacts (via TPR repeats) with CRY1 and CRY2; the interaction with CRY2 down-regulates the phosphatase activity on CSNK1E. Interacts (via TPR repeats) with the active form of RAC1, GNA12 or GNA13; these interactions activate the phosphatase activity and translocate PPP5C to the cell membrane. Interacts with FLCN. Mg(2+) is required as a cofactor. It depends on Mn(2+) as a cofactor. In terms of processing, activated by at least two different proteolytic cleavages producing a 56 kDa and a 50 kDa form. Ubiquitous.

Its subcellular location is the nucleus. The protein localises to the cytoplasm. It is found in the cell membrane. It catalyses the reaction O-phospho-L-seryl-[protein] + H2O = L-seryl-[protein] + phosphate. The catalysed reaction is O-phospho-L-threonyl-[protein] + H2O = L-threonyl-[protein] + phosphate. Autoinhibited. In the autoinhibited state, the TPR domain interacts with the catalytic region and prevents substrate access to the catalytic pocket. Allosterically activated by various polyunsaturated fatty acids, free long-chain fatty-acids and long-chain fatty acyl-CoA esters, arachidonic acid being the most effective activator. HSP90A and probably RAC1, GNA12 and GNA13 can also release the autoinhibition by the TPR repeat. Activation by RAC1, GNA12 and GNA13 is synergistic with the one produced by fatty acids binding. Inhibited by okadaic acid. Its function is as follows. Serine/threonine-protein phosphatase that dephosphorylates a myriad of proteins involved in different signaling pathways including the kinases CSNK1E, ASK1/MAP3K5, PRKDC and RAF1, the nuclear receptors NR3C1, PPARG, ESR1 and ESR2, SMAD proteins and TAU/MAPT. Implicated in wide ranging cellular processes, including apoptosis, differentiation, DNA damage response, cell survival, regulation of ion channels or circadian rhythms, in response to steroid and thyroid hormones, calcium, fatty acids, TGF-beta as well as oxidative and genotoxic stresses. Participates in the control of DNA damage response mechanisms such as checkpoint activation and DNA damage repair through, for instance, the regulation ATM/ATR-signaling and dephosphorylation of PRKDC and TP53BP1. Inhibits ASK1/MAP3K5-mediated apoptosis induced by oxidative stress. Plays a positive role in adipogenesis, mainly through the dephosphorylation and activation of PPARG transactivation function. Also dephosphorylates and inhibits the anti-adipogenic effect of NR3C1. Regulates the circadian rhythms, through the dephosphorylation and activation of CSNK1E. May modulate TGF-beta signaling pathway by the regulation of SMAD3 phosphorylation and protein expression levels. Dephosphorylates and may play a role in the regulation of TAU/MAPT. Through their dephosphorylation, may play a role in the regulation of ions channels such as KCNH2. Dephosphorylate FNIP1, disrupting interaction with HSP90AA1/Hsp90. This is Serine/threonine-protein phosphatase 5 (PPP5C) from Homo sapiens (Human).